Reading from the N-terminus, the 515-residue chain is MKEAGQMQNLESARAGRSVSTQTGSMTGQIPRLSKVNLFTLLSLWMELFPAVEAQRQKSQKNEEGKHGPLGDNEEMTRVSTDKRQVKRTGLVVVKNMKIVGLHCSSEDLHAGQIALIKHGSRLKNCDLYFSRKPCSACLKMIVNAGVNRISYWPADPEISLLTEASSSEDAKLDAKAVERLKSNSRAHVCVLLQPLVCYMVQFVEETSYKCDFIQKITKTLPDANTDFYYERKQERIKEYEMLFLVSNEEMHKQILMTIGLENLCENPYFSNLRQNMKDLILLLATVASSVPNFKHFGFYRSNPEQINEIHNQSLPQEIARHCMVQARLLAYRTEDHKTGVGAVIWAEGKSRSCDGTGAMYFVGCGYNAFPVGSEYADFPHMDDKQKDREIRKFRYIIHAERNALTFRCQEIKPEERSMIFVTKCPCDECVPLIKGAGIKQIYAGDVDVGKKKADISYMRFGELEGVSKFTWQLNPSGAYGLEQNEPERRENGVLRPVPQKEEQHQDKKLCLGIH.

Composition is skewed to polar residues over residues 1–11 and 18–27; these read MKEAGQMQNLE and SVSTQTGSMT. Disordered regions lie at residues 1-27 and 56-83; these read MKEA…GSMT and RQKS…STDK. Over residues 60 to 83 the composition is skewed to basic and acidic residues; sequence QKNEEGKHGPLGDNEEMTRVSTDK. The CMP/dCMP-type deaminase 1 domain maps to 71–169; it reads GDNEEMTRVS…SLLTEASSSE (99 aa). The Zn(2+) site is built by histidine 110, cysteine 135, and cysteine 138. The short motif at 272–284 is the Nuclear export signal element; sequence NLRQNMKDLILLL. Residues 318–483 enclose the CMP/dCMP-type deaminase 2 domain; the sequence is EIARHCMVQA…LNPSGAYGLE (166 aa). Zn(2+) is bound at residue histidine 399. Glutamate 401 acts as the Proton donor in catalysis. Zn(2+)-binding residues include cysteine 427 and cysteine 430. The Bipartite nuclear localization signal motif lies at 489–511; it reads RRENGVLRPVPQKEEQHQDKKLC. Residues 494–515 form a disordered region; that stretch reads VLRPVPQKEEQHQDKKLCLGIH.

This sequence belongs to the cytidine and deoxycytidylate deaminase family. The cofactor is Zn(2+).

The protein resides in the cytoplasm. It is found in the nucleus. It catalyses the reaction 2'-deoxycytidine + H2O + H(+) = 2'-deoxyuridine + NH4(+). It carries out the reaction cytidine + H2O + H(+) = uridine + NH4(+). Its function is as follows. Catalyzes the deamination of cytidine and deoxycytidine into uridine and deoxyuridine, respectively. May play an important role in testicular development and spermatogenesis. The sequence is that of Cytidine and dCMP deaminase domain-containing protein 1 (CDADC1) from Pongo abelii (Sumatran orangutan).